The primary structure comprises 267 residues: Probable proteasome subunit beta type-2 (267 aa).

A propeptide spans 1-35 (removed in mature form); that stretch reads MMGINERKGFDFEYYQRNLLLQEKGFPTPKATSTG. Catalysis depends on Thr36, which acts as the Nucleophile.

Belongs to the peptidase T1B family. The 26S proteasome consists of a 20S proteasome core and two 19S regulatory subunits. The 20S proteasome core is composed of 28 subunits that are arranged in four stacked rings, resulting in a barrel-shaped structure. The two end rings are each formed by seven alpha subunits, and the two central rings are each formed by seven beta subunits. The catalytic chamber with the active sites is on the inside of the barrel.

The protein resides in the cytoplasm. The protein localises to the nucleus. The catalysed reaction is Cleavage of peptide bonds with very broad specificity.. In terms of biological role, the proteasome is a multicatalytic proteinase complex which is characterized by its ability to cleave peptides with Arg, Phe, Tyr, Leu, and Glu adjacent to the leaving group at neutral or slightly basic pH. The proteasome has an ATP-dependent proteolytic activity (Potential). The chain is Probable proteasome subunit beta type-2 (pup1) from Schizosaccharomyces pombe (strain 972 / ATCC 24843) (Fission yeast).